A 917-amino-acid chain; its full sequence is DNA topoisomerase 1 beta (917 aa).

The segment at 1–368 (MATEAFVKPV…SLPSGDGQKK (368 aa)) is disordered. The span at 32-63 (RNSNTAATTNRPSPINNAMRNSAIGSTKSSPP) shows a compositional bias: polar residues. Low complexity predominate over residues 66-82 (SPLTSPNRSASSSTRSS). A compositionally biased stretch (polar residues) spans 89–100 (PSSSSVQRSTLK). 2 stretches are compositionally biased toward basic and acidic residues: residues 102-116 (PLRDDRSVVAKERNG) and 134-149 (DKPLSARLKLDSKEVT). Positions 150 to 170 (KQPSSSGRGSTQQAVQKSNMR) are enriched in polar residues. Residues 177–187 (YTKKKVLDERA) are compositionally biased toward basic and acidic residues. The segment covering 189 to 205 (MSSTVQTKTSVGTSSSK) has biased composition (polar residues). 2 stretches are compositionally biased toward basic and acidic residues: residues 256 to 265 (KLSEPARPVK) and 296 to 307 (VKEDNSDGDDHV). The residue at position 301 (Ser301) is a Phosphoserine. Over residues 316–338 (DSSNNKSSSAKPSSSKMIASSSR) the composition is skewed to low complexity. Interaction with DNA stretches follow at residues 575 to 576 (KY), 638 to 643 (RAGNEK), and 729 to 731 (TAK). The Topo IB-type catalytic domain occupies 582 to 912 (SSSLKGQSDK…MDVDPEFRFC (331 aa)). Residues 779–858 (VSKSHGAQVE…ERDMQTKEDM (80 aa)) are a coiled coil. The active-site O-(3'-phospho-DNA)-tyrosine intermediate is Tyr870.

This sequence belongs to the type IB topoisomerase family.

The protein localises to the nucleus. It carries out the reaction ATP-independent breakage of single-stranded DNA, followed by passage and rejoining.. Its function is as follows. Releases the supercoiling and torsional tension of DNA introduced during the DNA replication and transcription by transiently cleaving and rejoining one strand of the DNA duplex. Introduces a single-strand break via transesterification at a target site in duplex DNA. The scissile phosphodiester is attacked by the catalytic tyrosine of the enzyme, resulting in the formation of a DNA-(3'-phosphotyrosyl)-enzyme intermediate and the expulsion of a 5'-OH DNA strand. The free DNA strand then rotates around the intact phosphodiester bond on the opposing strand, thus removing DNA supercoils. Finally, in the religation step, the DNA 5'-OH attacks the covalent intermediate to expel the active-site tyrosine and restore the DNA phosphodiester backbone. Topoisomerases 1 enzymes (TOP1A and TOP1B) are essential for plant survival. This is DNA topoisomerase 1 beta from Arabidopsis thaliana (Mouse-ear cress).